The primary structure comprises 327 residues: Glutamyl endopeptidase (327 aa).

Residues 1–29 (MKGKFLKVSSLFVATLTTATLVSSPAANA) form the signal peptide. A propeptide spanning residues 30–68 (LSSKAMDNHPQQSQSSKQQTPKIQKGGNLKPLEQREHAN) is cleaved from the precursor. A disordered region spans residues 33 to 61 (KAMDNHPQQSQSSKQQTPKIQKGGNLKPL). Residues 40–54 (QQSQSSKQQTPKIQK) are compositionally biased toward low complexity. Residues His-119, Asp-161, and Ser-237 each act as charge relay system in the active site. The disordered stretch occupies residues 283-327 (FANDDQPNNPDNPDNPNNPDNPNNPNNPDNPDNGDNNNSDNPDAA). Low complexity predominate over residues 286 to 327 (DDQPNNPDNPDNPNNPDNPNNPNNPDNPDNGDNNNSDNPDAA). A run of 9 repeats spans residues 289 to 291 (PNN), 292 to 294 (PDN), 295 to 297 (PDN), 298 to 300 (PNN), 301 to 303 (PDN), 304 to 306 (PNN), 307 to 309 (PNN), 310 to 312 (PDN), and 313 to 315 (PDN). The tract at residues 289–315 (PNNPDNPDNPNNPDNPNNPNNPDNPDN) is 9 X 3 AA repeats of P-[DN]-N.

This sequence belongs to the peptidase S1B family. Proteolytically cleaved by aureolysin (aur). This cleavage leads to the activation of SspA.

Its subcellular location is the secreted. It catalyses the reaction Preferential cleavage: Glu-|-Xaa, Asp-|-Xaa.. Preferentially cleaves peptide bonds on the carboxyl-terminal side of aspartate and glutamate. Along with other extracellular proteases it is involved in colonization and infection of human tissues. Required for proteolytic maturation of thiol protease SspB and inactivation of SspC, an inhibitor of SspB. It is the most important protease for degradation of fibronectin-binding protein (FnBP) and surface protein A, which are involved in adherence to host cells. May also protect bacteria against host defense mechanism by cleaving the immunoglobulin classes IgG, IgA and IgM. May be involved in the stability of secreted lipases. This is Glutamyl endopeptidase (sspA) from Staphylococcus aureus (strain MW2).